A 153-amino-acid chain; its full sequence is 3-hydroxyacyl-[acyl-carrier-protein] dehydratase FabZ (153 aa).

Residue H58 is part of the active site.

The protein belongs to the thioester dehydratase family. FabZ subfamily.

The protein localises to the cytoplasm. The catalysed reaction is a (3R)-hydroxyacyl-[ACP] = a (2E)-enoyl-[ACP] + H2O. Involved in unsaturated fatty acids biosynthesis. Catalyzes the dehydration of short chain beta-hydroxyacyl-ACPs and long chain saturated and unsaturated beta-hydroxyacyl-ACPs. The sequence is that of 3-hydroxyacyl-[acyl-carrier-protein] dehydratase FabZ from Bradyrhizobium diazoefficiens (strain JCM 10833 / BCRC 13528 / IAM 13628 / NBRC 14792 / USDA 110).